The sequence spans 145 residues: Large ribosomal subunit protein uL13 (145 aa).

Belongs to the universal ribosomal protein uL13 family. As to quaternary structure, part of the 50S ribosomal subunit.

Its function is as follows. This protein is one of the early assembly proteins of the 50S ribosomal subunit, although it is not seen to bind rRNA by itself. It is important during the early stages of 50S assembly. This is Large ribosomal subunit protein uL13 from Bacillus mycoides (strain KBAB4) (Bacillus weihenstephanensis).